The following is an 828-amino-acid chain: Leucine--tRNA ligase (828 aa).

The 'HIGH' region motif lies at 36 to 46 (PYPSGKIHIGH). A 'KMSKS' region motif is present at residues 595 to 599 (KMSKS). K598 contributes to the ATP binding site.

It belongs to the class-I aminoacyl-tRNA synthetase family.

The protein resides in the cytoplasm. The enzyme catalyses tRNA(Leu) + L-leucine + ATP = L-leucyl-tRNA(Leu) + AMP + diphosphate. The polypeptide is Leucine--tRNA ligase (Rickettsia prowazekii (strain Madrid E)).